Here is a 429-residue protein sequence, read N- to C-terminus: Malate dehydrogenase [NADP] 1, chloroplastic (429 aa).

Residues Met1–Cys40 constitute a chloroplast transit peptide. Cys64 and Cys69 are joined by a disulfide. Gly93–Ser99 is an NADP(+) binding site. The substrate site is built by Arg174 and Arg180. Residues Asn187, Gln194, and Val211–Asn213 contribute to the NADP(+) site. Residues Asn213 and Arg244 each coordinate substrate. His269 acts as the Proton acceptor in catalysis. A disulfide bond links Cys405 and Cys417.

The protein belongs to the LDH/MDH superfamily. MDH type 2 family. In terms of assembly, homodimer.

The protein localises to the plastid. It localises to the chloroplast. It carries out the reaction (S)-malate + NADP(+) = oxaloacetate + NADPH + H(+). Its activity is regulated as follows. Chloroplast NADP-MDH is activated upon illumination. In order to be enzymatically active, disulfide bridges on the protein must be reduced by thioredoxin which receives electrons from ferredoxin and the electron transport system of photosynthesis. Its function is as follows. The chloroplastic, NADP-dependent form is essential for the photosynthesis C4 cycle, which allows plants to circumvent the problem of photorespiration. In C4 plants, NADP-MDH activity acts to convert oxaloacetate to malate in chloroplasts of mesophyll cells for transport to the bundle sheath cells. This Sorghum bicolor (Sorghum) protein is Malate dehydrogenase [NADP] 1, chloroplastic.